The primary structure comprises 229 residues: Ferric nitrobindin-like protein (229 aa).

The tract at residues 1 to 54 is disordered; that stretch reads MSENSTPNNPVVPGAGADGPSLSDSASISGSDAVNLAAEQSKSTAHRNIPGLGD. Positions 18 to 33 are enriched in low complexity; that stretch reads DGPSLSDSASISGSDA. The GXWXGXG signature appears at 82–88; that stretch reads GVWRGEG.

This sequence belongs to the nitrobindin family.

This chain is Ferric nitrobindin-like protein, found in Corynebacterium glutamicum (strain R).